Consider the following 138-residue polypeptide: Ribulose bisphosphate carboxylase small subunit (138 aa).

The protein belongs to the RuBisCO small chain family. As to quaternary structure, heterohexadecamer of 8 large and 8 small subunits.

It localises to the plastid. It is found in the chloroplast. Functionally, ruBisCO catalyzes two reactions: the carboxylation of D-ribulose 1,5-bisphosphate, the primary event in carbon dioxide fixation, as well as the oxidative fragmentation of the pentose substrate in the photorespiration process. Both reactions occur simultaneously and in competition at the same active site. Although the small subunit is not catalytic it is essential for maximal activity. This is Ribulose bisphosphate carboxylase small subunit from Pyropia haitanensis (Red seaweed).